The sequence spans 425 residues: Zinc finger protein 789 (425 aa).

Positions leucine 11–alanine 82 constitute a KRAB domain. 8 consecutive C2H2-type zinc fingers follow at residues tyrosine 201 to histidine 223, phenylalanine 229 to histidine 251, tyrosine 257 to histidine 279, tyrosine 285 to histidine 307, histidine 313 to histidine 335, histidine 341 to histidine 363, phenylalanine 369 to histidine 391, and tyrosine 397 to histidine 419.

The protein belongs to the krueppel C2H2-type zinc-finger protein family.

It is found in the nucleus. Functionally, may be involved in transcriptional regulation. The chain is Zinc finger protein 789 (ZNF789) from Homo sapiens (Human).